A 332-amino-acid chain; its full sequence is NADH-quinone oxidoreductase subunit H (332 aa).

Transmembrane regions (helical) follow at residues 4 to 24 (FAFFALEALIKCIIIIAIFAS), 44 to 64 (IGPDMVGPFGLIQLVADMIKL), 78 to 98 (FIFAIAPLISAICAFVSLAAI), 120 to 140 (VALLFVIGTSGLCFYAVFLGG), 165 to 185 (VGALALIAIVMLVGSFSLVDI), 194 to 214 (FSWLIFKQPLAFVLFIIALFI), 255 to 275 (IAGAILVTLLFLGGFNSFWII), 279 to 299 (IMMIVKSSFIFFWYFWARAAF), and 312 to 332 (YLILIPLAVLNLLITALAVLL).

Belongs to the complex I subunit 1 family. NDH-1 is composed of 14 different subunits. Subunits NuoA, H, J, K, L, M, N constitute the membrane sector of the complex.

It is found in the cell inner membrane. It catalyses the reaction a quinone + NADH + 5 H(+)(in) = a quinol + NAD(+) + 4 H(+)(out). In terms of biological role, NDH-1 shuttles electrons from NADH, via FMN and iron-sulfur (Fe-S) centers, to quinones in the respiratory chain. The immediate electron acceptor for the enzyme in this species is believed to be ubiquinone. Couples the redox reaction to proton translocation (for every two electrons transferred, four hydrogen ions are translocated across the cytoplasmic membrane), and thus conserves the redox energy in a proton gradient. This subunit may bind ubiquinone. The chain is NADH-quinone oxidoreductase subunit H from Campylobacter jejuni (strain RM1221).